Reading from the N-terminus, the 449-residue chain is GTPase Der (449 aa).

2 consecutive EngA-type G domains span residues 4-174 (PIVA…PPKT) and 183-358 (LRIA…VQRQ). GTP-binding positions include 10-17 (GRPNVGKS), 57-61 (DTAGV), 126-129 (NKCD), 189-196 (GRPNVGKS), 236-240 (DTAGI), and 301-304 (NKWD). One can recognise a KH-like domain in the interval 359–444 (KRVPTSELNN…PIVIVFRSRE (86 aa)).

It belongs to the TRAFAC class TrmE-Era-EngA-EngB-Septin-like GTPase superfamily. EngA (Der) GTPase family. In terms of assembly, associates with the 50S ribosomal subunit.

Its function is as follows. GTPase that plays an essential role in the late steps of ribosome biogenesis. This is GTPase Der from Chloroflexus aurantiacus (strain ATCC 29366 / DSM 635 / J-10-fl).